A 177-amino-acid chain; its full sequence is MKLPKEGDFITIQSYKHDGSLHRTWRDTMVLKTTENALIGVNDHTLVTESDGRRWVTREPAIVYFHKKYWFNIIAMIRDNGVSYYCNLASPYMMDTEALKYIDYDLDVKVFADGEKRLLDVDEYEIHKKEMQYSADMDFILKENVKILVDWINHEKGPFSKAYITIWYKRYLELKNR.

Arg-23 serves as the catalytic Proton donor. Mg(2+) is bound by residues Asn-87, Asp-103, Asp-105, Asp-107, Asp-120, and Glu-123.

This sequence belongs to the Ntdp family. It depends on Mg(2+) as a cofactor.

It carries out the reaction a ribonucleoside 5'-triphosphate + H2O = a ribonucleoside 5'-diphosphate + phosphate + H(+). It catalyses the reaction a ribonucleoside 5'-diphosphate + H2O = a ribonucleoside 5'-phosphate + phosphate + H(+). Its function is as follows. Has nucleoside phosphatase activity towards nucleoside triphosphates and nucleoside diphosphates. This Streptococcus pyogenes serotype M1 protein is Nucleoside triphosphate/diphosphate phosphatase.